The following is a 317-amino-acid chain: Melanocyte-stimulating hormone receptor (317 aa).

The tract at residues 1–23 is disordered; the sequence is MSGQGPQRRLLGSPNATSPTTPH. The Extracellular segment spans residues 1-37; that stretch reads MSGQGPQRRLLGSPNATSPTTPHFKLAANQTGPRCLE. N-linked (GlcNAc...) asparagine glycosylation is present at N29. The chain crosses the membrane as a helical span at residues 38–63; it reads VSIPNGLFLSLGLVSVVENVLVVAAI. Residues 64–72 are Cytoplasmic-facing; it reads AKNRNLHSP. A helical membrane pass occupies residues 73-93; it reads MYYFIGCLAVSDLLVSVTNVL. At 94 to 118 the chain is on the extracellular side; that stretch reads ETAVMLLVEAGALAAQAAVVQQLDD. A helical transmembrane segment spans residues 119 to 140; that stretch reads IIDVLICGSMVSSLCFLGAIAV. At 141 to 163 the chain is on the cytoplasmic side; sequence DRYLSIFYALRYHSIVTLPRAWR. A helical membrane pass occupies residues 164 to 183; it reads AISAIWVASVLSSTLFIAYY. At 184-191 the chain is on the extracellular side; sequence NHTAVLLC. The chain crosses the membrane as a helical span at residues 192–211; the sequence is LVSFFVAMLVLMAVLYVHML. The Cytoplasmic portion of the chain corresponds to 212 to 240; it reads ARARQHARGIARLRKRQHSVHQGFGLKGA. The helical transmembrane segment at 241-266 threads the bilayer; sequence ATLTILLGIFFLCWGPFFLHLSLMVL. Residues 267-279 are Extracellular-facing; sequence CPQHPICGCVFQN. The chain crosses the membrane as a helical span at residues 280 to 300; sequence FNLFLTLIICNSIIDPFIYAF. Over 301–317 the chain is Cytoplasmic; that stretch reads RSQELRKTLQEVVLCSW. C315 carries the S-palmitoyl cysteine lipid modification.

The protein belongs to the G-protein coupled receptor 1 family. As to quaternary structure, interacts with MGRN1, but does not undergo MGRN1-mediated ubiquitination; this interaction competes with GNAS-binding and thus inhibits agonist-induced cAMP production. Interacts with OPN3; the interaction results in a decrease in MC1R-mediated cAMP signaling and ultimately a decrease in melanin production in melanocytes.

The protein localises to the cell membrane. Its function is as follows. Receptor for MSH (alpha, beta and gamma) and ACTH. The activity of this receptor is mediated by G proteins which activate adenylate cyclase. Mediates melanogenesis, the production of eumelanin (black/brown) and phaeomelanin (red/yellow), via regulation of cAMP signaling in melanocytes. The chain is Melanocyte-stimulating hormone receptor (MC1R) from Vulpes vulpes (Red fox).